A 667-amino-acid polypeptide reads, in one-letter code: METNAVSLIYRCRVGERMSQHDTDGRVSVYAENIGGISQCDVTFKPGVNVLRGRNATGRTSLLNGLAGVLGGTAPVLKGDEQEAEVRLEFNGTTYDQQYTRKNGTVQAAGQPVTERRDLVDLFVCLTAENPARRAIVQDGNLRDVIMRPVDTGSIQRRIEDLQSERNRIGQRIRAIEDDLDQRTSLTSRKTTLVSDLDECDQEIEELRNQLEQFDADPEEAEEIEQALTSLEERKQELESITNRIRTQEDTREALRDEQSELQTEREAIETSEEELKRIETRLSELTSRERSLATTINDLSAIVDFNEDLVSNADSDLLRSGDAAESPVSKLNPMSETVECWTCGTEVERNRIAGRLDDLRDLVDEKRTERSEVQTEIEELRESQQELQEVIHRRDEIGQRLSEISSEIAQRDQTLESLSEEREDVHQRLSELEEFVSEREALQESELTEQYQQLSELEYQRGQLEEELSAVREELAELDRLENERDQLQAQQDEIQAELVSQRTQIRDLEESAITAFNDHMEEILDVLRYKNIARVWIERKEGAEFNSSHGGYRGGSATKFELHVVRETDEGRGYEDTVQSLSESEREVVGLVVALAGYLVHDVYEVIPMMLLDSLEAIDADRIAALVDYFADYAPYLIVALLPEDADALGGDETSVVPASFASEE.

2 coiled-coil regions span residues 153–295 and 355–517; these read GSIQ…SLAT and GRLD…AITA.

The protein belongs to the Sph1/Sph2 family.

The protein resides in the cytoplasm. In terms of biological role, may play a role in replication. This is Smc-like protein Sph2 (sph2) from Halobacterium salinarum (strain ATCC 29341 / DSM 671 / R1).